A 93-amino-acid chain; its full sequence is Small ribosomal subunit protein uS15 (93 aa).

The protein belongs to the universal ribosomal protein uS15 family. In terms of assembly, part of the 30S ribosomal subunit. Forms a bridge to the 50S subunit in the 70S ribosome, contacting the 23S rRNA.

One of the primary rRNA binding proteins, it binds directly to 16S rRNA where it helps nucleate assembly of the platform of the 30S subunit by binding and bridging several RNA helices of the 16S rRNA. Functionally, forms an intersubunit bridge (bridge B4) with the 23S rRNA of the 50S subunit in the ribosome. The polypeptide is Small ribosomal subunit protein uS15 (Ehrlichia ruminantium (strain Gardel)).